We begin with the raw amino-acid sequence, 43 residues long: Protein PsbN (43 aa).

Residues 5-27 (TLVAISISCLLVSFTGYALYTAF) traverse the membrane as a helical segment.

This sequence belongs to the PsbN family.

The protein localises to the plastid. The protein resides in the chloroplast thylakoid membrane. May play a role in photosystem I and II biogenesis. The sequence is that of Protein PsbN from Cedrus deodara (Deodar cedar).